The sequence spans 315 residues: Putative quercetin 2,3-dioxygenase PA1205 (315 aa).

4 residues coordinate a divalent metal cation: H77, H79, H121, and E123.

This sequence belongs to the pirin family. A divalent metal cation is required as a cofactor.

It carries out the reaction quercetin + O2 = 2-(3,4-dihydroxybenzoyloxy)-4,6-dihydroxybenzoate + CO. Its pathway is flavonoid metabolism; quercetin degradation. Putative quercetin 2,3-dioxygenase. The protein is Putative quercetin 2,3-dioxygenase PA1205 of Pseudomonas aeruginosa (strain ATCC 15692 / DSM 22644 / CIP 104116 / JCM 14847 / LMG 12228 / 1C / PRS 101 / PAO1).